Reading from the N-terminus, the 851-residue chain is MAKTNISPGMQQYLDIKKDYPDAFLLFRMGDFYELFYEDAVKAAQLLEIGLTSRNKNAENPIPMAGVPHHSAQQYIDVLIELGYKVAVAEQMEDPKQAVGVVKREVVQVITPGTVVDSAKPDSANNFLVAVDFDGCRYGLAYMDVSTGEFCVTDLADFTSVRSEIQNLKAKEVLLGFDLSEEEQTILVKQMNLLLSYEETVYEDKSLIDGQLTTVELTAAGKLLQYVHKTQMRELSHLQALVHYEIKDYLQMSYATKSSLDLVENARTNKKHGSLYWLLDETKTAMGMRLLRSWIDRPLVSKEAILERQEIIQVFLNAFIERTDLSNSLKGVYDIERLSSRVSFGKANPKDLLQLGHTLAQVPYIKAILESFDSPCVDKLVNDIDSLPELEYLIRTAIDPDAPATISEGSIIRNGFDERLDHYRKVMREGTGWIADIEAKERQESGINNLKIDYNKKDGYYFHVTNSNLSLVPEHFFRKATLKNSERYGTAELAKIEGQMLEAREESSSLEYDIFMCIRAQVETYINRLQKLAKTLATVDVLQSLAVVAETNHYIRPQFNDNHVITIQEGRHAVVEKVMGVQEYIPNSISFDQQTSIQLITGPNMSGKSTYMRQLALTVIMAQMGSFVAADHVDLPLFDAIFTRIGAADDLISGQSTFMVEMMEANQAIKRASDNSLILFDELGRGTATYDGMALAQAIIEYIHDRVGAKTIFATHYHELTDLSTKLTSLVNVHVATLEKDGDVTFLHKIAEGPADKSYGIHVAKIAGLPKSLLKRADEVLTRLETQSRSTEIISVPSQVESSNAVRQGQLSLFGDEEKAHEIRQALEAIDVMNMTPLQAMTTLYELKKLL.

602–609 (GPNMSGKS) lines the ATP pocket.

It belongs to the DNA mismatch repair MutS family.

In terms of biological role, this protein is involved in the repair of mismatches in DNA. It is possible that it carries out the mismatch recognition step. This protein has a weak ATPase activity. This is DNA mismatch repair protein MutS from Streptococcus pyogenes serotype M49 (strain NZ131).